The chain runs to 146 residues: 3-dehydroquinate dehydratase (146 aa).

Tyr23 serves as the catalytic Proton acceptor. Positions 75, 81, and 88 each coordinate substrate. His101 acts as the Proton donor in catalysis. Substrate-binding positions include 102-103 and Arg112; that span reads LS.

The protein belongs to the type-II 3-dehydroquinase family. In terms of assembly, homododecamer.

The enzyme catalyses 3-dehydroquinate = 3-dehydroshikimate + H2O. Its pathway is metabolic intermediate biosynthesis; chorismate biosynthesis; chorismate from D-erythrose 4-phosphate and phosphoenolpyruvate: step 3/7. Its function is as follows. Catalyzes a trans-dehydration via an enolate intermediate. The chain is 3-dehydroquinate dehydratase from Marinobacter nauticus (strain ATCC 700491 / DSM 11845 / VT8) (Marinobacter aquaeolei).